Consider the following 317-residue polypeptide: Putative HTH-type transcriptional regulatory protein TGAM_1316 (317 aa).

In terms of domain architecture, HTH cro/C1-type spans 131-189; it reads LKKLREKHGYSVGELASLLGVSRKSLLNYERNEQAVSLEVALRMEELFDEPIAEPIDVL. The H-T-H motif DNA-binding region spans 142–161; it reads VGELASLLGVSRKSLLNYER.

This chain is Putative HTH-type transcriptional regulatory protein TGAM_1316, found in Thermococcus gammatolerans (strain DSM 15229 / JCM 11827 / EJ3).